Consider the following 608-residue polypeptide: Kinetochore protein NUF2 (608 aa).

The interval isoleucine 121 to arginine 125 is required for nuclear localization and function. Coiled-coil stretches lie at residues phenylalanine 176–leucine 319 and arginine 358–glutamate 460.

It belongs to the NUF2 family.

It localises to the chromosome. Its subcellular location is the centromere. The protein localises to the kinetochore. In terms of biological role, required for anchoring centrosomal cores to the nuclear periphery. Plays a role in chromosome segregation but is dispensable for centromere clustering. This Toxoplasma gondii (strain ATCC 50611 / Me49) protein is Kinetochore protein NUF2.